A 367-amino-acid polypeptide reads, in one-letter code: MNRLALYCRQGFEKECAAEITAKAAELEVFGFARVKDNSGYVLFECYQPDDADRLAKEIPFRELIFARQILVVGELLRDLPPEDRVSPIVGMLIGVVDRGGELRVEVPDTNESKELLKFCRKLTVPLRTAMREQKVLMARENKTRPVVHVFFIAPGCCYVGYSFSNNNSPFYMGIPRLKFPSDAPSRSTLKLEEAFHVFIPADEWDERLASGMHAVDLGACPGGWTYQLVQRSMMVHAVDNGPMAPSLMDTGQVTHHRADGFRYEPSSSKIYWLVCDMVEKPAKVTSLMIQWLVKGWCREAIFNLKLPMKKRYEEVSQNLLAIKEALDTAGISSEIHAKQLYHDREEVTVHVRRMWSAVAGRRDERD.

Residues S188, 221 to 224, D240, D260, and D277 each bind S-adenosyl-L-methionine; that span reads CPGG. Residue K306 is the Proton acceptor of the active site.

This sequence belongs to the class I-like SAM-binding methyltransferase superfamily. RNA methyltransferase RlmE family. RlmM subfamily. In terms of assembly, monomer.

The protein resides in the cytoplasm. It carries out the reaction cytidine(2498) in 23S rRNA + S-adenosyl-L-methionine = 2'-O-methylcytidine(2498) in 23S rRNA + S-adenosyl-L-homocysteine + H(+). Its function is as follows. Catalyzes the 2'-O-methylation at nucleotide C2498 in 23S rRNA. The chain is Ribosomal RNA large subunit methyltransferase M from Serratia proteamaculans (strain 568).